Consider the following 471-residue polypeptide: 3-isopropylmalate dehydratase large subunit (471 aa).

The [4Fe-4S] cluster site is built by C349, C409, and C412.

It belongs to the aconitase/IPM isomerase family. LeuC type 1 subfamily. As to quaternary structure, heterodimer of LeuC and LeuD. The cofactor is [4Fe-4S] cluster.

The catalysed reaction is (2R,3S)-3-isopropylmalate = (2S)-2-isopropylmalate. It participates in amino-acid biosynthesis; L-leucine biosynthesis; L-leucine from 3-methyl-2-oxobutanoate: step 2/4. In terms of biological role, catalyzes the isomerization between 2-isopropylmalate and 3-isopropylmalate, via the formation of 2-isopropylmaleate. The sequence is that of 3-isopropylmalate dehydratase large subunit from Aliivibrio fischeri (strain ATCC 700601 / ES114) (Vibrio fischeri).